The sequence spans 92 residues: DNA-directed RNA polymerase subunit omega (92 aa).

It belongs to the RNA polymerase subunit omega family. As to quaternary structure, the RNAP catalytic core consists of 2 alpha, 1 beta, 1 beta' and 1 omega subunit. When a sigma factor is associated with the core the holoenzyme is formed, which can initiate transcription.

The enzyme catalyses RNA(n) + a ribonucleoside 5'-triphosphate = RNA(n+1) + diphosphate. Its function is as follows. Promotes RNA polymerase assembly. Latches the N- and C-terminal regions of the beta' subunit thereby facilitating its interaction with the beta and alpha subunits. The protein is DNA-directed RNA polymerase subunit omega of Shewanella denitrificans (strain OS217 / ATCC BAA-1090 / DSM 15013).